We begin with the raw amino-acid sequence, 209 residues long: Ribonuclease HII (209 aa).

In terms of domain architecture, RNase H type-2 spans 18–209 (GLVAGVDEVG…FKPVKALLER (192 aa)). A divalent metal cation-binding residues include aspartate 24, glutamate 25, and aspartate 116.

Belongs to the RNase HII family. It depends on Mn(2+) as a cofactor. Mg(2+) is required as a cofactor.

It is found in the cytoplasm. It catalyses the reaction Endonucleolytic cleavage to 5'-phosphomonoester.. Functionally, endonuclease that specifically degrades the RNA of RNA-DNA hybrids. This is Ribonuclease HII from Shewanella sp. (strain ANA-3).